A 149-amino-acid chain; its full sequence is Large ribosomal subunit protein bL17 (149 aa).

It belongs to the bacterial ribosomal protein bL17 family. Part of the 50S ribosomal subunit. Contacts protein L32.

The sequence is that of Large ribosomal subunit protein bL17 from Kosmotoga olearia (strain ATCC BAA-1733 / DSM 21960 / TBF 19.5.1).